The following is a 245-amino-acid chain: Large ribosomal subunit protein eL29 (245 aa).

Positions 1–26 (MAKSKNHTTHNQSRKWHRNGIKKPRS) are enriched in basic residues. Disordered regions lie at residues 1 to 33 (MAKSKNHTTHNQSRKWHRNGIKKPRSQRYESLK) and 114 to 245 (RGLR…AKAP). K5 is subject to N6-methyllysine. Residue S31 is modified to Phosphoserine. K33 is subject to N6-acetyllysine. Over residues 134–150 (KGKVKAQIKAQAQAQIK) the composition is skewed to low complexity. Over residues 157–171 (AQAETKPKAQAETKP) the composition is skewed to basic and acidic residues. Composition is skewed to low complexity over residues 172-226 (KAQA…ATPA) and 234-245 (PPKGAQPPAKAP).

Belongs to the eukaryotic ribosomal protein eL29 family. Component of the large ribosomal subunit.

Its subcellular location is the cytoplasm. Component of the large ribosomal subunit. The ribosome is a large ribonucleoprotein complex responsible for the synthesis of proteins in the cell. In Oryctolagus cuniculus (Rabbit), this protein is Large ribosomal subunit protein eL29 (RPL29).